The chain runs to 254 residues: Tryptophan synthase alpha chain (254 aa).

Catalysis depends on proton acceptor residues Glu48 and Asp59.

It belongs to the TrpA family. As to quaternary structure, tetramer of two alpha and two beta chains.

The enzyme catalyses (1S,2R)-1-C-(indol-3-yl)glycerol 3-phosphate + L-serine = D-glyceraldehyde 3-phosphate + L-tryptophan + H2O. The protein operates within amino-acid biosynthesis; L-tryptophan biosynthesis; L-tryptophan from chorismate: step 5/5. Functionally, the alpha subunit is responsible for the aldol cleavage of indoleglycerol phosphate to indole and glyceraldehyde 3-phosphate. The protein is Tryptophan synthase alpha chain of Desulfotalea psychrophila (strain LSv54 / DSM 12343).